A 456-amino-acid polypeptide reads, in one-letter code: Putative F-box/FBD/LRR-repeat protein At1g66300 (456 aa).

A disordered region spans residues Met1–Lys23. An F-box domain is found at Val28–Asp74. 4 LRR repeats span residues His136–Gly163, Val185–Arg210, Pro234–His260, and Phe347–Ser372. The region spanning Met377–Leu429 is the FBD domain.

The chain is Putative F-box/FBD/LRR-repeat protein At1g66300 from Arabidopsis thaliana (Mouse-ear cress).